Here is a 187-residue protein sequence, read N- to C-terminus: uncharacterized protein (187 aa).

Positions E139–D168 are enriched in basic and acidic residues. The segment at E139–E172 is disordered.

This is an uncharacterized protein from Caenorhabditis elegans.